A 388-amino-acid polypeptide reads, in one-letter code: Processive diacylglycerol beta-glucosyltransferase (388 aa).

It belongs to the glycosyltransferase 28 family. UgtP subfamily.

Its subcellular location is the cell membrane. It carries out the reaction a 1,2-diacyl-3-O-(beta-D-glucopyranosyl)-sn-glycerol + UDP-alpha-D-glucose = a 1,2-diacyl-3-O-(beta-D-Glc-(1-&gt;6)-beta-D-Glc)-sn-glycerol + UDP + H(+). It catalyses the reaction a 1,2-diacyl-3-O-(beta-D-Glc-(1-&gt;6)-beta-D-Glc)-sn-glycerol + UDP-alpha-D-glucose = a 1,2-diacyl-3-O-(beta-D-Glc-(1-&gt;6)-beta-D-Glc-(1-&gt;6)-beta-D-Glc)-sn-glycerol + UDP + H(+). The catalysed reaction is a 1,2-diacyl-sn-glycerol + UDP-alpha-D-glucose = a 1,2-diacyl-3-O-(beta-D-glucopyranosyl)-sn-glycerol + UDP + H(+). It functions in the pathway glycolipid metabolism; diglucosyl-diacylglycerol biosynthesis. Processive glucosyltransferase involved in the biosynthesis of both the bilayer- and non-bilayer-forming membrane glucolipids. Is able to successively transfer up to three glucosyl residues to diacylglycerol (DAG), thereby catalyzing the formation of beta-monoglucosyl-DAG (3-O-(beta-D-glucopyranosyl)-1,2-diacyl-sn-glycerol), beta-diglucosyl-DAG (3-O-(beta-D-glucopyranosyl-beta-(1-&gt;6)-D-glucopyranosyl)-1,2-diacyl-sn-glycerol) and beta-triglucosyl-DAG (3-O-(beta-D-glucopyranosyl-beta-(1-&gt;6)-D-glucopyranosyl-beta-(1-&gt;6)-D-glucopyranosyl)-1,2-diacyl-sn-glycerol). Beta-diglucosyl-DAG is the predominant glycolipid found in Bacillales and is also used as a membrane anchor for lipoteichoic acid (LTA). This Bacillus cereus (strain B4264) protein is Processive diacylglycerol beta-glucosyltransferase.